A 663-amino-acid chain; its full sequence is Forkhead protein sep1 (663 aa).

Residues 128–222 (KPPYSYAMLI…LKLKLRKPGV (95 aa)) constitute a DNA-binding region (fork-head). Disordered regions lie at residues 220–241 (PGVNSRPAPPVQDVTSSTKYGS) and 325–387 (SPLQ…DVET). Over residues 340 to 355 (SPASSASPSESLRNES) the composition is skewed to low complexity. The residue at position 446 (Ser446) is a Phosphoserine.

It is found in the nucleus. In terms of biological role, required for promoter sequence element PCB-driven, M-phase-specific transcription. Acts as a transcriptional activator with a role in the regulation of mitosis. Regulates septation and the periodic transcription of cdc15. The protein is Forkhead protein sep1 (sep1) of Schizosaccharomyces pombe (strain 972 / ATCC 24843) (Fission yeast).